The primary structure comprises 282 residues: Shikimate dehydrogenase (NADP(+)) (282 aa).

Residues Ser16 to Ser18 and Thr63 each bind shikimate. Lys67 acts as the Proton acceptor in catalysis. Shikimate contacts are provided by Asn88 and Asp103. NADP(+) is bound by residues Gly128–Ala132 and Leu219. Tyr221 serves as a coordination point for shikimate. Residue Gly243 coordinates NADP(+).

This sequence belongs to the shikimate dehydrogenase family. Homodimer.

The catalysed reaction is shikimate + NADP(+) = 3-dehydroshikimate + NADPH + H(+). It functions in the pathway metabolic intermediate biosynthesis; chorismate biosynthesis; chorismate from D-erythrose 4-phosphate and phosphoenolpyruvate: step 4/7. Functionally, involved in the biosynthesis of the chorismate, which leads to the biosynthesis of aromatic amino acids. Catalyzes the reversible NADPH linked reduction of 3-dehydroshikimate (DHSA) to yield shikimate (SA). The protein is Shikimate dehydrogenase (NADP(+)) of Xylella fastidiosa (strain M12).